We begin with the raw amino-acid sequence, 380 residues long: PqqA peptide cyclase (380 aa).

Residues 12-228 (FGIPLAVLLE…EEARERLKGR (217 aa)) form the Radical SAM core domain. Positions 26, 30, and 33 each coordinate [4Fe-4S] cluster.

It belongs to the radical SAM superfamily. PqqE family. In terms of assembly, interacts with PqqD. The interaction is necessary for activity of PqqE. [4Fe-4S] cluster is required as a cofactor.

The enzyme catalyses [PQQ precursor protein] + S-adenosyl-L-methionine = E-Y cross-linked-[PQQ precursor protein] + 5'-deoxyadenosine + L-methionine + H(+). It functions in the pathway cofactor biosynthesis; pyrroloquinoline quinone biosynthesis. Functionally, catalyzes the cross-linking of a glutamate residue and a tyrosine residue in the PqqA protein as part of the biosynthesis of pyrroloquinoline quinone (PQQ). The sequence is that of PqqA peptide cyclase from Bradyrhizobium diazoefficiens (strain JCM 10833 / BCRC 13528 / IAM 13628 / NBRC 14792 / USDA 110).